The sequence spans 120 residues: Ribosome-binding factor A (120 aa).

It belongs to the RbfA family. Monomer. Binds 30S ribosomal subunits, but not 50S ribosomal subunits or 70S ribosomes.

Its subcellular location is the cytoplasm. One of several proteins that assist in the late maturation steps of the functional core of the 30S ribosomal subunit. Associates with free 30S ribosomal subunits (but not with 30S subunits that are part of 70S ribosomes or polysomes). Required for efficient processing of 16S rRNA. May interact with the 5'-terminal helix region of 16S rRNA. In Rickettsia conorii (strain ATCC VR-613 / Malish 7), this protein is Ribosome-binding factor A.